Reading from the N-terminus, the 53-residue chain is UPF0391 membrane protein BamMC406_6344 (53 aa).

2 helical membrane passes run 5 to 25 (AIIFFVIAIIAAVFGFGGIAA) and 30 to 50 (IAKILFYIFVVIFLVTLLLGV).

The protein belongs to the UPF0391 family.

It localises to the cell membrane. The protein is UPF0391 membrane protein BamMC406_6344 of Burkholderia ambifaria (strain MC40-6).